We begin with the raw amino-acid sequence, 345 residues long: Nicotinate-nucleotide--dimethylbenzimidazole phosphoribosyltransferase (345 aa).

Glu312 (proton acceptor) is an active-site residue.

This sequence belongs to the CobT family.

The catalysed reaction is 5,6-dimethylbenzimidazole + nicotinate beta-D-ribonucleotide = alpha-ribazole 5'-phosphate + nicotinate + H(+). It participates in nucleoside biosynthesis; alpha-ribazole biosynthesis; alpha-ribazole from 5,6-dimethylbenzimidazole: step 1/2. In terms of biological role, catalyzes the synthesis of alpha-ribazole-5'-phosphate from nicotinate mononucleotide (NAMN) and 5,6-dimethylbenzimidazole (DMB). The protein is Nicotinate-nucleotide--dimethylbenzimidazole phosphoribosyltransferase of Phocaeicola vulgatus (strain ATCC 8482 / DSM 1447 / JCM 5826 / CCUG 4940 / NBRC 14291 / NCTC 11154) (Bacteroides vulgatus).